A 524-amino-acid chain; its full sequence is GMP synthase [glutamine-hydrolyzing] (524 aa).

Residues 5-195 (KVIVIDFGGQ…VRGVCGCAGT (191 aa)) enclose the Glutamine amidotransferase type-1 domain. The active-site Nucleophile is cysteine 82. Residues histidine 169 and glutamate 171 contribute to the active site. The region spanning 196–389 (WKMDSFVKNT…LGLPDYLVFR (194 aa)) is the GMPS ATP-PPase domain. 223–229 (SGGVDSS) contributes to the ATP binding site.

In terms of assembly, homodimer.

The catalysed reaction is XMP + L-glutamine + ATP + H2O = GMP + L-glutamate + AMP + diphosphate + 2 H(+). The protein operates within purine metabolism; GMP biosynthesis; GMP from XMP (L-Gln route): step 1/1. Functionally, catalyzes the synthesis of GMP from XMP. This chain is GMP synthase [glutamine-hydrolyzing], found in Agathobacter rectalis (strain ATCC 33656 / DSM 3377 / JCM 17463 / KCTC 5835 / VPI 0990) (Eubacterium rectale).